We begin with the raw amino-acid sequence, 358 residues long: Phenylalanine--tRNA ligase alpha subunit (358 aa).

Mg(2+) is bound at residue Glu-258.

Belongs to the class-II aminoacyl-tRNA synthetase family. Phe-tRNA synthetase alpha subunit type 1 subfamily. Tetramer of two alpha and two beta subunits. It depends on Mg(2+) as a cofactor.

The protein resides in the cytoplasm. The enzyme catalyses tRNA(Phe) + L-phenylalanine + ATP = L-phenylalanyl-tRNA(Phe) + AMP + diphosphate + H(+). The protein is Phenylalanine--tRNA ligase alpha subunit of Rhodospirillum centenum (strain ATCC 51521 / SW).